Consider the following 311-residue polypeptide: Solute carrier family 25 member 36 (311 aa).

Solcar repeat units follow at residues R4–K108, D116–K203, and S224–L308. 6 helical membrane-spanning segments follow: residues L7–L27, L41–N57, G111–T131, M180–I200, F226–P246, and Q291–G311.

Belongs to the mitochondrial carrier (TC 2.A.29) family.

The protein resides in the mitochondrion inner membrane. It catalyses the reaction UTP(in) + CTP(out) = UTP(out) + CTP(in). The enzyme catalyses CTP(out) + UDP(in) = CTP(in) + UDP(out). It carries out the reaction UMP(in) + CTP(out) = UMP(out) + CTP(in). The catalysed reaction is dUTP(in) + CTP(out) = dUTP(out) + CTP(in). It catalyses the reaction dUMP(in) + CTP(out) = dUMP(out) + CTP(in). The enzyme catalyses CDP(in) + CTP(out) = CDP(out) + CTP(in). It carries out the reaction CTP(out) + CMP(in) = CTP(in) + CMP(out). The catalysed reaction is dCTP(in) + CTP(out) = dCTP(out) + CTP(in). It catalyses the reaction dCDP(in) + CTP(out) = dCDP(out) + CTP(in). The enzyme catalyses dCMP(in) + CTP(out) = dCMP(out) + CTP(in). It carries out the reaction GTP(in) + CTP(out) = GTP(out) + CTP(in). The catalysed reaction is CTP(out) + GDP(in) = CTP(in) + GDP(out). It catalyses the reaction GMP(in) + CTP(out) = GMP(out) + CTP(in). The enzyme catalyses dGTP(in) + CTP(out) = dGTP(out) + CTP(in). It carries out the reaction dGMP(in) + CTP(out) = dGMP(out) + CTP(in). The catalysed reaction is ITP(in) + CTP(out) = ITP(out) + CTP(in). It catalyses the reaction IDP(in) + CTP(out) = IDP(out) + CTP(in). The enzyme catalyses IMP(in) + CTP(out) = IMP(out) + CTP(in). It carries out the reaction CTP(out) = CTP(in). In terms of biological role, mitochondrial transporter that imports/exports pyrimidine nucleotides into and from mitochondria. Selectively transports cytosine, guanosine, inosine and uridine (deoxy)nucleoside mono-, di-, and triphosphates by antiport mechanism. Catalyzes uniport at much lower rate. May import (deoxy)nucleoside triphosphates in exchange for intramitochondrial (deoxy)nucleoside mono- and diphosphates, thus providing precursors necessary for de novo synthesis of mitochondrial DNA and RNA while exporting products of their catabolism. Participates in mitochondrial genome maintenance, regulation of mitochondrial membrane potential and mitochondrial respiration. This is Solute carrier family 25 member 36 (Slc25a36) from Mus musculus (Mouse).